We begin with the raw amino-acid sequence, 960 residues long: UvrABC system protein A (960 aa).

Position 35 to 42 (35 to 42 (GLSGSGKS)) interacts with ATP. The segment at 270–297 (CAHCNVSVPELQPRLFSFNAPFGACPSC) adopts a C4-type zinc-finger fold. ABC transporter domains lie at 327–605 (FKPE…QASL) and 625–953 (GNGN…WYIK). Residue 657 to 664 (GVSGSGKS) participates in ATP binding. The C4-type zinc-finger motif lies at 756–782 (CEHCKGDGVITIEMNFLPDVYITCDVC).

It belongs to the ABC transporter superfamily. UvrA family. Forms a heterotetramer with UvrB during the search for lesions.

It is found in the cytoplasm. In terms of biological role, the UvrABC repair system catalyzes the recognition and processing of DNA lesions. UvrA is an ATPase and a DNA-binding protein. A damage recognition complex composed of 2 UvrA and 2 UvrB subunits scans DNA for abnormalities. When the presence of a lesion has been verified by UvrB, the UvrA molecules dissociate. This Treponema pallidum (strain Nichols) protein is UvrABC system protein A.